We begin with the raw amino-acid sequence, 157 residues long: Pyruvoyl-dependent arginine decarboxylase (157 aa).

Residue Ser44 is modified to Pyruvic acid (Ser).

This sequence belongs to the PdaD family. It depends on pyruvate as a cofactor.

It carries out the reaction L-arginine + H(+) = agmatine + CO2. This is Pyruvoyl-dependent arginine decarboxylase from Thermococcus kodakarensis (strain ATCC BAA-918 / JCM 12380 / KOD1) (Pyrococcus kodakaraensis (strain KOD1)).